Consider the following 97-residue polypeptide: MEAVERIENPCGIRLRIFLQPKASRDQIVGLHDNELKIAITALPVDGAANAHLLKYLSKLFKVPKSSIVLEKGELQRHKQLFVPEPKLIPKEIEALL.

Belongs to the UPF0235 family.

This is UPF0235 protein APL_1380 from Actinobacillus pleuropneumoniae serotype 5b (strain L20).